A 323-amino-acid chain; its full sequence is Aldo-keto reductase family 1 member C2 (323 aa).

Residues 20–24 (GFGTY) and Asp-50 each bind NADP(+). Residue Tyr-24 participates in substrate binding. Residue Tyr-55 is the Proton donor of the active site. Position 117 (His-117) interacts with substrate. NADP(+)-binding positions include 166 to 167 (SN), Gln-190, and 216 to 222 (YSALGSH). His-222 and Trp-227 together coordinate substrate. 270 to 280 (KSYNEQRIRQN) provides a ligand contact to NADP(+).

The protein belongs to the aldo/keto reductase family. As to expression, expressed in fetal testes. Expressed in fetal and adult adrenal glands.

The protein localises to the cytoplasm. Its subcellular location is the cytosol. The enzyme catalyses a 3alpha-hydroxysteroid + NADP(+) = a 3-oxosteroid + NADPH + H(+). It carries out the reaction a 3alpha-hydroxysteroid + NAD(+) = a 3-oxosteroid + NADH + H(+). The catalysed reaction is 5alpha-androstane-3alpha,17beta-diol + NADP(+) = 17beta-hydroxy-5alpha-androstan-3-one + NADPH + H(+). It catalyses the reaction 5alpha-androstane-3alpha,17beta-diol + NAD(+) = 17beta-hydroxy-5alpha-androstan-3-one + NADH + H(+). The enzyme catalyses 5alpha-androstane-3alpha,17beta-diol + NAD(+) = androsterone + NADH + H(+). It carries out the reaction 17beta-estradiol + NADP(+) = estrone + NADPH + H(+). The catalysed reaction is 17beta-estradiol + NAD(+) = estrone + NADH + H(+). It catalyses the reaction (20S)-hydroxypregn-4-en-3-one + NADP(+) = progesterone + NADPH + H(+). The enzyme catalyses (20S)-hydroxypregn-4-en-3-one + NAD(+) = progesterone + NADH + H(+). It carries out the reaction androsterone + NADP(+) = 5alpha-androstan-3,17-dione + NADPH + H(+). The catalysed reaction is (3beta,5alpha,17beta)-3-hydroxy-androstan-17-yl sulfate + NADP(+) = 5alpha-dihydrotestosterone sulfate + NADPH + H(+). It catalyses the reaction (1R,2R)-1,2-dihydrobenzene-1,2-diol + NADP(+) = catechol + NADPH + H(+). The enzyme catalyses (S)-indan-1-ol + NAD(+) = indan-1-one + NADH + H(+). It carries out the reaction (S)-indan-1-ol + NADP(+) = indan-1-one + NADPH + H(+). The protein operates within steroid metabolism. Inhibited by hexestrol with an IC(50) of 2.8 uM, 1,10-phenanthroline with an IC(50) of 2100 uM, 1,7-phenanthroline with an IC(50) of 1500 uM, flufenamic acid with an IC(50) of 0.9 uM, indomethacin with an IC(50) of 75 uM, ibuprofen with an IC(50) of 6.9 uM, lithocholic acid with an IC(50) of 0.07 uM, ursodeoxycholic acid with an IC(50) of 0.08 uM and chenodeoxycholic acid with an IC(50) of 0.13 uM. The oxidation reaction is inhibited by low micromolar concentrations of NADPH. In terms of biological role, cytosolic aldo-keto reductase that catalyzes the NADH and NADPH-dependent reduction of ketosteroids to hydroxysteroids. Most probably acts as a reductase in vivo since the oxidase activity measured in vitro is inhibited by physiological concentrations of NADPH. Displays a broad positional specificity acting on positions 3, 17 and 20 of steroids and regulates the metabolism of hormones like estrogens and androgens. Works in concert with the 5-alpha/5-beta-steroid reductases to convert steroid hormones into the 3-alpha/5-alpha and 3-alpha/5-beta-tetrahydrosteroids. Catalyzes the inactivation of the most potent androgen 5-alpha-dihydrotestosterone (5-alpha-DHT) to 5-alpha-androstane-3-alpha,17-beta-diol (3-alpha-diol). Also specifically able to produce 17beta-hydroxy-5alpha-androstan-3-one/5alphaDHT. May also reduce conjugated steroids such as 5alpha-dihydrotestosterone sulfate. Displays affinity for bile acids. The sequence is that of Aldo-keto reductase family 1 member C2 (AKR1C2) from Homo sapiens (Human).